Consider the following 201-residue polypeptide: UPF0376 protein F10G2.1 (201 aa).

Residues 1–3 (MKH) are Cytoplasmic-facing. The chain crosses the membrane as a helical; Signal-anchor for type II membrane protein span at residues 4–24 (FLLLAIIGILFLGSTYGASVA). Over 25–201 (TEKLKASNCT…LLECDFRNIQ (177 aa)) the chain is Extracellular. Residues N32 and N124 are each glycosylated (N-linked (GlcNAc...) asparagine).

It belongs to the UPF0376 family.

It localises to the membrane. The chain is UPF0376 protein F10G2.1 from Caenorhabditis elegans.